The chain runs to 75 residues: Scuwaprin-a (75 aa).

Residues 1 to 24 (MSSGGLLLLLGLLTLWAELTPVSG) form the signal peptide. In terms of domain architecture, WAP spans 27 to 72 (RPKKPGLCPPRPQKPPCVKECKNDWSCPGQQKCCSYGCIDECRDPI). Cystine bridges form between cysteine 34/cysteine 60, cysteine 43/cysteine 64, cysteine 47/cysteine 59, and cysteine 53/cysteine 68.

The protein belongs to the venom waprin family. In terms of tissue distribution, expressed by the venom gland.

The protein localises to the secreted. In terms of biological role, damages membranes of susceptible bacteria. Has no hemolytic activity. Not toxic to mice. Does not inhibit the proteinases elastase and cathepsin G. In Oxyuranus scutellatus scutellatus (Australian taipan), this protein is Scuwaprin-a.